The primary structure comprises 154 residues: Putative pre-16S rRNA nuclease (154 aa).

Belongs to the YqgF nuclease family.

The protein localises to the cytoplasm. In terms of biological role, could be a nuclease involved in processing of the 5'-end of pre-16S rRNA. This chain is Putative pre-16S rRNA nuclease, found in Rickettsia conorii (strain ATCC VR-613 / Malish 7).